A 418-amino-acid chain; its full sequence is MLYLEDYLEMIEQLPMDLRDRFTEMREMDLQVQNAMDQLEQRVSEFFMNAKKNKPEWREEQMASIKKDYYKALEDADEKVQLANQIYDLVDRHLRKLDQELAKFKMELEADNAGITEILERRSLELDTPSQPVNNHHAHSHTPVEKRKYNPTSHHTTTDHIPEKKFKSEALLSTLTSDASKENTLGCRNNNSTASSNNAYNVNSSQPLGSYNIGSLSSGTGAGAITMAAAQAVQATAQMKEGRRTSSLKASYEAFKNNDFQLGKEFSMARETVGYSSSSALMTTLTQNASSSAADSRSGRKSKNNNKSSSQQSSSSSSSSSLSSCSSSSTVVQEISQQTTVVPESDSNSQVDWTYDPNEPRYCICNQVSYGEMVGCDNQDCPIEWFHYGCVGLTEAPKGKWYCPQCTAAMKRRGSRHK.

A disordered region spans residues 127 to 165; that stretch reads DTPSQPVNNHHAHSHTPVEKRKYNPTSHHTTTDHIPEKK. Residues lysine 148, lysine 165, and lysine 167 each participate in a glycyl lysine isopeptide (Lys-Gly) (interchain with G-Cter in SUMO2) cross-link. Residues 156–165 are compositionally biased toward basic and acidic residues; the sequence is TTTDHIPEKK. Lysine 181 bears the N6-acetyllysine mark. Lysine 256 participates in a covalent cross-link: Glycyl lysine isopeptide (Lys-Gly) (interchain with G-Cter in SUMO2). Residue lysine 264 is modified to N6-acetyllysine. Residues 286–325 are disordered; that stretch reads TQNASSSAADSRSGRKSKNNNKSSSQQSSSSSSSSSLSSC. Residues 305–325 are compositionally biased toward low complexity; the sequence is NNKSSSQQSSSSSSSSSLSSC. A PHD-type zinc finger spans residues 360–409; sequence PRYCICNQVSYGEMVGCDNQDCPIEWFHYGCVGLTEAPKGKWYCPQCTAA. Zn(2+) is bound by residues cysteine 363, cysteine 365, cysteine 376, cysteine 381, histidine 387, cysteine 390, cysteine 403, and cysteine 406.

Belongs to the ING family. As to quaternary structure, interacts with H3K4me3 and to a lesser extent with H3K4me2. Component of the NuA4 histone acetyltransferase complex which contains the catalytic subunit KAT5/TIP60 and the subunits EP400, TRRAP/PAF400, BRD8/SMAP, EPC1, DMAP1/DNMAP1, RUVBL1/TIP49, RUVBL2, ING3, actin, ACTL6A/BAF53A, MORF4L1/MRG15, MORF4L2/MRGX, MRGBP, YEATS4/GAS41, VPS72/YL1 and MEAF6. The NuA4 complex interacts with MYC and the adenovirus E1A protein. HTATTIP/TIP60, EPC1, and ING3 together constitute a minimal HAT complex termed Piccolo NuA4. Component of a SWR1-like complex. In terms of tissue distribution, expressed in brain, heart, kidney, liver, lung, ovaries, placenta, prostate, skeletal muscle, small intestine, spleen, testis and thymus.

The protein localises to the nucleus. Functionally, component of the NuA4 histone acetyltransferase (HAT) complex which is involved in transcriptional activation of select genes principally by acetylation of nucleosomal histones H4 and H2A. This modification may both alter nucleosome - DNA interactions and promote interaction of the modified histones with other proteins which positively regulate transcription. This complex may be required for the activation of transcriptional programs associated with oncogene and proto-oncogene mediated growth induction, tumor suppressor mediated growth arrest and replicative senescence, apoptosis, and DNA repair. NuA4 may also play a direct role in DNA repair when directly recruited to sites of DNA damage. Component of a SWR1-like complex that specifically mediates the removal of histone H2A.Z/H2AZ1 from the nucleosome. In Homo sapiens (Human), this protein is Inhibitor of growth protein 3 (ING3).